A 395-amino-acid polypeptide reads, in one-letter code: Ribosomal RNA large subunit methyltransferase G (395 aa).

This sequence belongs to the methyltransferase superfamily. RlmG family.

The protein localises to the cytoplasm. The enzyme catalyses guanosine(1835) in 23S rRNA + S-adenosyl-L-methionine = N(2)-methylguanosine(1835) in 23S rRNA + S-adenosyl-L-homocysteine + H(+). Specifically methylates the guanine in position 1835 (m2G1835) of 23S rRNA. This chain is Ribosomal RNA large subunit methyltransferase G, found in Yersinia pestis (strain Pestoides F).